Here is a 228-residue protein sequence, read N- to C-terminus: Phosphatidylserine decarboxylase proenzyme (228 aa).

The active-site Schiff-base intermediate with substrate; via pyruvic acid is Ser197. Position 197 is a pyruvic acid (Ser); by autocatalysis (Ser197).

This sequence belongs to the phosphatidylserine decarboxylase family. PSD-A subfamily. Heterodimer of a large membrane-associated beta subunit and a small pyruvoyl-containing alpha subunit. Pyruvate serves as cofactor. Post-translationally, is synthesized initially as an inactive proenzyme. Formation of the active enzyme involves a self-maturation process in which the active site pyruvoyl group is generated from an internal serine residue via an autocatalytic post-translational modification. Two non-identical subunits are generated from the proenzyme in this reaction, and the pyruvate is formed at the N-terminus of the alpha chain, which is derived from the carboxyl end of the proenzyme. The post-translation cleavage follows an unusual pathway, termed non-hydrolytic serinolysis, in which the side chain hydroxyl group of the serine supplies its oxygen atom to form the C-terminus of the beta chain, while the remainder of the serine residue undergoes an oxidative deamination to produce ammonia and the pyruvoyl prosthetic group on the alpha chain.

Its subcellular location is the cell membrane. The enzyme catalyses a 1,2-diacyl-sn-glycero-3-phospho-L-serine + H(+) = a 1,2-diacyl-sn-glycero-3-phosphoethanolamine + CO2. The protein operates within phospholipid metabolism; phosphatidylethanolamine biosynthesis; phosphatidylethanolamine from CDP-diacylglycerol: step 2/2. Its function is as follows. Catalyzes the formation of phosphatidylethanolamine (PtdEtn) from phosphatidylserine (PtdSer). The chain is Phosphatidylserine decarboxylase proenzyme from Phocaeicola vulgatus (strain ATCC 8482 / DSM 1447 / JCM 5826 / CCUG 4940 / NBRC 14291 / NCTC 11154) (Bacteroides vulgatus).